A 351-amino-acid polypeptide reads, in one-letter code: Porphobilinogen deaminase (351 aa).

The residue at position 242 (cysteine 242) is an S-(dipyrrolylmethanemethyl)cysteine.

The protein belongs to the HMBS family. In terms of assembly, monomer. Dipyrromethane serves as cofactor.

The enzyme catalyses 4 porphobilinogen + H2O = hydroxymethylbilane + 4 NH4(+). Its pathway is porphyrin-containing compound metabolism; protoporphyrin-IX biosynthesis; coproporphyrinogen-III from 5-aminolevulinate: step 2/4. Tetrapolymerization of the monopyrrole PBG into the hydroxymethylbilane pre-uroporphyrinogen in several discrete steps. The protein is Porphobilinogen deaminase of Rickettsia peacockii (strain Rustic).